The following is a 434-amino-acid chain: MFS-type transporter AFUA_1G00970 (434 aa).

12 consecutive transmembrane segments (helical) span residues 21–41 (VIGG…FGVF), 60–80 (WIGS…GVLV), 87–107 (VLLI…SLCS), 112–132 (IFLA…WPPF), 145–165 (LALG…SIMI), 182–202 (VLGF…TEPP), 240–260 (VFIS…NPFF), 278–298 (YMIS…GIVA), 301–321 (VGHY…SFCW), 327–347 (LTGL…ILSL), 364–384 (AIGF…PIGG), and 393–413 (LSLS…MGYA). The tract at residues 201 to 225 (PPKQSQPQPRPALEATVEGGSASPT) is disordered.

It belongs to the major facilitator superfamily. Monocarboxylate porter (TC 2.A.1.13) family.

It localises to the cell membrane. Functionally, MFS-type transporter; part of the gene cluster that mediates the biosynthesis of fumigermin that inhibits germination of spores of the inducing S.rapamycinicus, and thus helps the fungus to defend resources in the shared habitat against a bacterial competitor. May be involved in the secretion of fumigermin. This is MFS-type transporter AFUA_1G00970 from Aspergillus fumigatus (strain ATCC MYA-4609 / CBS 101355 / FGSC A1100 / Af293) (Neosartorya fumigata).